A 190-amino-acid chain; its full sequence is Pyridoxal 5'-phosphate synthase subunit PdxT (190 aa).

Residue glycine 46–serine 48 participates in L-glutamine binding. The active-site Nucleophile is the cysteine 78. L-glutamine contacts are provided by residues arginine 105 and isoleucine 134 to arginine 135. Active-site charge relay system residues include histidine 170 and glutamate 172.

The protein belongs to the glutaminase PdxT/SNO family. As to quaternary structure, in the presence of PdxS, forms a dodecamer of heterodimers. Only shows activity in the heterodimer.

It catalyses the reaction aldehydo-D-ribose 5-phosphate + D-glyceraldehyde 3-phosphate + L-glutamine = pyridoxal 5'-phosphate + L-glutamate + phosphate + 3 H2O + H(+). It carries out the reaction L-glutamine + H2O = L-glutamate + NH4(+). It functions in the pathway cofactor biosynthesis; pyridoxal 5'-phosphate biosynthesis. Its function is as follows. Catalyzes the hydrolysis of glutamine to glutamate and ammonia as part of the biosynthesis of pyridoxal 5'-phosphate. The resulting ammonia molecule is channeled to the active site of PdxS. This Clostridium beijerinckii (strain ATCC 51743 / NCIMB 8052) (Clostridium acetobutylicum) protein is Pyridoxal 5'-phosphate synthase subunit PdxT.